A 605-amino-acid polypeptide reads, in one-letter code: F-box/WD repeat-containing protein 1A (605 aa).

Residues 128–177 form a homodimerization domain D region; sequence ASYEKEKELCVKYFEQWSESDQVEFVEHLISQMCHYQHGHINSYLKPMLQ. In terms of domain architecture, F-box spans 182–228; that stretch reads TALPARGLDHIAENILSYLDAKSLCAAELVCKEWYRVTSDGMLWKKL. The required for down-regulation of SNAI1 stretch occupies residues 190 to 228; the sequence is DHIAENILSYLDAKSLCAAELVCKEWYRVTSDGMLWKKL. WD repeat units follow at residues 301-338, 341-378, 381-418, 424-461, 464-503, 505-541, and 553-590; these read ETSK…CKRI, GHTG…MLNT, HHCE…DITL, GHRA…FVRT, GHKR…RVLE, HEEL…DPRA, and EHSG…AAHA.

Homodimer. Self-associates. Component of the SCF(BTRC) complex, composed of SKP1, CUL1 and BTRC. Direct interaction with SKP1 with SKP1 occurs via the F-box domain. Interacts with phosphorylated ubiquitination substrates SMAD3 and SMAD4. Interacts with phosphorylated ubiquitination substrates CTNNB1, NFKBIA, NFKBIB, NFKBIE, NFKB1/nuclear factor NF-kappa-B p105 subunit, ATF4, CDC25A, DLG1, FBXO5 and SNAI1; the interaction requires the phosphorylation of the 2 serine residues in the substrate destruction motif D-S-G-X(2,3,4)-S. Binds UBQLN1. Interacts with CDC34 and UBE2R2. Interacts with FBXW11. Interacts with CUL4A and DDB1. Part of a SCF(BTRC)-like complex lacking CUL1, which is associated with phosphorylated NKBIA and RELA; RELA interacts directly with NFKBIA. Interacts with the phosphorylated form of GLI3. Interacts with CLU. Interacts with PER1 (phosphorylated), PER2 (phosphorylated) and PER3. Interacts with phosphorylated ubiquitination substrate CEP68. Interacts with ZC3H12A; this interaction occurs when ZC3H12A is phosphorylated in a IKBKB/IKKB-dependent manner. Interacts with HSF1; this interaction occurs during mitosis and induces HSF1 ubiquitin-dependent degradation, a process inhibited by CDC20. Interacts with NFE2L1. Interacts with INAVA. Interacts with IL10RA; this interaction leads to IL10RA ubiquitination and subsequent degradation. Interacts with REST. Interacts with KLF4; this interaction leads to KLF4 ubiquitination and subsequent degradation. Interacts with UBR2, as part of a SCF(BTRC) complex; the interaction mediates 'Lys-48'-linked ubiquitination of UBR2 and is regulated by DUSP22 in the T-cell receptor signaling pathway. In terms of processing, ubiquitinated via 'Lys-11'-linked polyubiquitin by some cullin-5-RING E3 ubiquitin-protein ligase complex (ECS complex), leading to its degradation. Deubiquitinated by OTUD5, promoting its stability. As to expression, expressed in heart, brain, liver, skeletal muscle and, most strongly, in testis.

It is found in the cytoplasm. It localises to the nucleus. It functions in the pathway protein modification; protein ubiquitination. Substrate recognition component of a SCF (SKP1-CUL1-F-box protein) E3 ubiquitin-protein ligase complex which mediates the ubiquitination and subsequent proteasomal degradation of target proteins. Recognizes and binds to phosphorylated target proteins. SCF(BTRC) mediates the ubiquitination of phosphorylated NFKB, ATF4, CDC25A, DLG1, FBXO5, PER1, SMAD3, SMAD4, SNAI1 and probably NFKB2. SCF(BTRC) mediates the ubiquitination of CTNNB1 and participates in Wnt signaling. SCF(BTRC) mediates the ubiquitination of NFKBIA, NFKBIB and NFKBIE; the degradation frees the associated NFKB1 to translocate into the nucleus and to activate transcription. Ubiquitination of NFKBIA occurs at 'Lys-21' and 'Lys-22'. The SCF(FBXW11) complex also regulates NF-kappa-B by mediating ubiquitination of phosphorylated NFKB1: specifically ubiquitinates the p105 form of NFKB1, leading to its degradation. SCF(BTRC) mediates the ubiquitination of CEP68; this is required for centriole separation during mitosis. SCF(BTRC) mediates the ubiquitination and subsequent degradation of nuclear NFE2L1. Has an essential role in the control of the clock-dependent transcription via degradation of phosphorylated PER1 and PER2. May be involved in ubiquitination and subsequent proteasomal degradation through a DBB1-CUL4 E3 ubiquitin-protein ligase. Required for activation of NFKB-mediated transcription by IL1B, MAP3K14, MAP3K1, IKBKB and TNF. Required for proteolytic processing of GLI3. Mediates ubiquitination of REST, thereby leading to its proteasomal degradation. SCF(BTRC) mediates the ubiquitination and subsequent proteasomal degradation of KLF4; thereby negatively regulating cell pluripotency maintenance and embryogenesis. SCF(BTRC) acts as a regulator of mTORC1 signaling pathway by catalyzing ubiquitination and subsequent proteasomal degradation of phosphorylated DEPTOR, TFE3 and MITF. SCF(BTRC) directs 'Lys-48'-linked ubiquitination of UBR2 in the T-cell receptor signaling pathway. This chain is F-box/WD repeat-containing protein 1A, found in Mus musculus (Mouse).